Here is a 563-residue protein sequence, read N- to C-terminus: Formate--tetrahydrofolate ligase (563 aa).

65 to 72 contacts ATP; the sequence is TPLGEGKT.

The protein belongs to the formate--tetrahydrofolate ligase family.

The enzyme catalyses (6S)-5,6,7,8-tetrahydrofolate + formate + ATP = (6R)-10-formyltetrahydrofolate + ADP + phosphate. It participates in one-carbon metabolism; tetrahydrofolate interconversion. The sequence is that of Formate--tetrahydrofolate ligase from Cutibacterium acnes (strain DSM 16379 / KPA171202) (Propionibacterium acnes).